A 292-amino-acid chain; its full sequence is Chronophin (292 aa).

Aspartate 25 serves as the catalytic Nucleophile. Aspartate 25 and aspartate 27 together coordinate Mg(2+). The Proton donor role is filled by aspartate 27. Substrate is bound by residues 58–60 (SNN), histidine 178, and lysine 209. Aspartate 234 is a Mg(2+) binding site.

Belongs to the HAD-like hydrolase superfamily. Homodimer. Mg(2+) is required as a cofactor. In terms of tissue distribution, ubiquitous. highly expressed in brain (at protein level).

Its subcellular location is the cytoplasm. The protein resides in the cytosol. It localises to the cytoskeleton. The protein localises to the cell projection. It is found in the ruffle membrane. Its subcellular location is the lamellipodium membrane. The protein resides in the cell membrane. The catalysed reaction is pyridoxal 5'-phosphate + H2O = pyridoxal + phosphate. It carries out the reaction pyridoxine 5'-phosphate + H2O = pyridoxine + phosphate. It catalyses the reaction pyridoxamine + phosphate = pyridoxamine 5'-phosphate + H2O. The enzyme catalyses O-phospho-L-seryl-[protein] + H2O = L-seryl-[protein] + phosphate. With respect to regulation, inhibited by beryllium trifluoride. Its function is as follows. Functions as a pyridoxal phosphate (PLP) phosphatase, which also catalyzes the dephosphorylation of pyridoxine 5'-phosphate (PNP) and pyridoxamine 5'-phosphate (PMP), with order of substrate preference PLP &gt; PNP &gt; PMP and therefore plays a role in vitamin B6 metabolism. Also functions as a protein serine phosphatase that specifically dephosphorylates 'Ser-3' in proteins of the actin-depolymerizing factor (ADF)/cofilin family like CFL1 and DSTN. Thereby, regulates cofilin-dependent actin cytoskeleton reorganization, being required for normal progress through mitosis and normal cytokinesis. Does not dephosphorylate phosphothreonines in LIMK1. Does not dephosphorylate peptides containing phosphotyrosine. The sequence is that of Chronophin from Mus musculus (Mouse).